The sequence spans 123 residues: UPF0102 protein PputGB1_4524 (123 aa).

Belongs to the UPF0102 family.

The polypeptide is UPF0102 protein PputGB1_4524 (Pseudomonas putida (strain GB-1)).